The chain runs to 101 residues: Small ribosomal subunit protein bS16 (101 aa).

Belongs to the bacterial ribosomal protein bS16 family.

The polypeptide is Small ribosomal subunit protein bS16 (Ureaplasma parvum serovar 3 (strain ATCC 700970)).